The sequence spans 166 residues: Ribosome-binding factor A (166 aa).

The interval 122-166 (HVADETDVEDSTDHEDDVTNSEDETKHVDIDTDSEEGTNTDGKAQ) is disordered. Acidic residues predominate over residues 126 to 143 (ETDVEDSTDHEDDVTNSE).

This sequence belongs to the RbfA family. Monomer. Binds 30S ribosomal subunits, but not 50S ribosomal subunits or 70S ribosomes.

It localises to the cytoplasm. One of several proteins that assist in the late maturation steps of the functional core of the 30S ribosomal subunit. Associates with free 30S ribosomal subunits (but not with 30S subunits that are part of 70S ribosomes or polysomes). Required for efficient processing of 16S rRNA. May interact with the 5'-terminal helix region of 16S rRNA. In Pseudoalteromonas translucida (strain TAC 125), this protein is Ribosome-binding factor A.